Here is a 247-residue protein sequence, read N- to C-terminus: MVTTTAENEVLTSTSAVTGLPQKRYYRQRAHSNPIADHCFDYPARPEDVDWRSLYPSIRADQEVSFADIGCGYGGFLVTLGELFPEKISIGMEIRVKVSDYVLDRITALRQKSSGTGAYQNIACLRTNAMKYLPNYFRKGQLEKMFFLYPDPHFKRAKHKWRIINQALLSEYAYVLRKGGLVYTMTDVEDLHNWIVTHMDEHPLYERLDEEEANTDPITPKLYQSSEEGAKVVRNKGDHFLAIFRRL.

S-adenosyl-L-methionine is bound by residues G70, 93 to 94, 128 to 129, and L148; these read EI and NA. D151 is a catalytic residue. Residue 226-228 participates in S-adenosyl-L-methionine binding; it reads SEE.

This sequence belongs to the class I-like SAM-binding methyltransferase superfamily. TrmB family.

It is found in the nucleus. It catalyses the reaction guanosine(46) in tRNA + S-adenosyl-L-methionine = N(7)-methylguanosine(46) in tRNA + S-adenosyl-L-homocysteine. Its pathway is tRNA modification; N(7)-methylguanine-tRNA biosynthesis. In terms of biological role, catalyzes the formation of N(7)-methylguanine at position 46 (m7G46) in tRNA. The sequence is that of tRNA (guanine-N(7)-)-methyltransferase from Drosophila pseudoobscura pseudoobscura (Fruit fly).